Consider the following 296-residue polypeptide: HTH-type transcriptional regulator IlvR (296 aa).

Residues M1–T58 form the HTH lysR-type domain. Residues F18–Q37 constitute a DNA-binding region (H-T-H motif).

It belongs to the LysR transcriptional regulatory family.

In terms of biological role, positively regulates the expression of the ilvD gene while negatively autoregulating its own expression. The sequence is that of HTH-type transcriptional regulator IlvR (ilvR) from Caulobacter vibrioides (strain ATCC 19089 / CIP 103742 / CB 15) (Caulobacter crescentus).